Reading from the N-terminus, the 21-residue chain is Granule-bound starch synthase 1 (21 aa).

Belongs to the glycosyltransferase 1 family. Bacterial/plant glycogen synthase subfamily.

The protein localises to the plastid. It is found in the chloroplast. Its subcellular location is the amyloplast. The catalysed reaction is an NDP-alpha-D-glucose + [(1-&gt;4)-alpha-D-glucosyl](n) = [(1-&gt;4)-alpha-D-glucosyl](n+1) + a ribonucleoside 5'-diphosphate + H(+). It functions in the pathway glycan biosynthesis; starch biosynthesis. The chain is Granule-bound starch synthase 1 from Secale cereale (Rye).